Consider the following 427-residue polypeptide: Intermediate conductance calcium-activated potassium channel protein 4 (427 aa).

Residues 29–49 traverse the membrane as a helical segment; the sequence is ALVLAGTGIGLMVLHAEMLWF. Residues 59–79 form a helical membrane-spanning segment; sequence FLVKCTISISTFLLLCLIVAF. The helical transmembrane segment at 108 to 128 threads the bilayer; it reads IVLELVVCGLHPAPVRGPPCV. The helical transmembrane segment at 143 to 163 threads the bilayer; the sequence is GFLGQGEALLSLAMLLRLYLV. Residues 207–227 traverse the membrane as a helical segment; that stretch reads LLLGLTLGLWLTTAWVLSVAE. Positions 241 to 261 form an intramembrane region, pore-forming; the sequence is LWLIPITFLTIGYGDVVPGTM. Residues 265-285 form a helical membrane-spanning segment; that stretch reads IVCLCTGVMGVCCTALLVAVV. Positions 286–347 are calmodulin-binding; sequence ARKLEFNKAE…RRHQRKLLAA (62 aa). Position 358 is a phosphohistidine (H358).

It belongs to the potassium channel KCNN family. KCa3.1/KCNN4 subfamily. In terms of assembly, homodimer. Homotetramer. Heterotetramer of potassium channel proteins. Interacts with MTMR6; this interaction leads to selective dephosphorylation of PI(3)P in a lipid microdomain adjacent to KCNN4, resulting in a decrease of intermediate conductance calcium-activated potassium channel activity. Interacts (via the C-tail domain) with CALM1; the calmodulin binding is constitutive, does not require calcium and mediates calcium-dependent gating and four calmodulin molecules bind to one channel tetramer. Post-translationally, phosphorylation at His-358 by NDKB activates the intermediate conductance calcium-activated potassium channel activity, and conversely it's dephosphorylation by PHPT1 inhibits this activity. As to expression, widely expressed in non-excitable tissues.

Its subcellular location is the cell membrane. The protein resides in the cell projection. It localises to the ruffle membrane. The catalysed reaction is K(+)(in) = K(+)(out). The channel is inhibited by clotrimazole and charybdotoxin but is insensitive to apamin. Intermediate conductance calcium-activated potassium channel that mediates the voltage-independent transmembrane transfer of potassium across the cell membrane through a constitutive interaction with calmodulin which binds the intracellular calcium allowing its opening. The current is characterized by a voltage-independent activation, an intracellular calcium concentration increase-dependent activation and a single-channel conductance of about 25 picosiemens. Also presents an inwardly rectifying current, thus reducing its already small outward conductance of potassium ions, which is particularly the case when the membrane potential displays positive values, above + 20 mV. Controls calcium influx during vascular contractility by being responsible of membrane hyperpolarization induced by vasoactive factors in proliferative vascular smooth muscle cell types. Following calcium influx, the consecutive activation of KCNN4 channel leads to a hyperpolarization of the cell membrane potential and hence an increase of the electrical driving force for further calcium influx promoting sustained calcium entry in response to stimulation with chemotactic peptides. Required for maximal calcium influx and proliferation during the reactivation of naive T-cells. Plays a role in the late stages of EGF-induced macropinocytosis through activation by PI(3)P. In Homo sapiens (Human), this protein is Intermediate conductance calcium-activated potassium channel protein 4.